The chain runs to 548 residues: MISKINGKLFADMIIQGAQNLSNNADLVDSLNVYPVPDGDTGTNMNLTMTSGREEVENNLSKNIGELGKTFSKGLLMGARGNSGVILSQLFRGFCKNIESESEINSKLLAESFQAGVETAYKAVMKPVEGTILTVAKDAAQAAIEKANNTEDCIELMEYIIVKANESLENTPNLLAVLKEVGVVDSGGKGLLCVYEGFLKALKGEKVEAKVAKLDKDEFVHDEHDFHGVINTEDIIYGYCTEMMVRFGKNKKAFDEQEFRQDMSQFGDSLLVINDEEIVKVHVHTEYPGKVFNYGQQYGELIKLKVENMREQHREVIRKEQHTAKPKMETVETAIITISMGEGISEIFKSMGATHIISGGQTMNPSTEDIVKVIEQSKCKRAIILPNNKNILMASEQAASIVDAEAVVIPTKSIPQGISALFQYDVDATLEENKAQMADSVNNVKSGSLTYAVRDTKIDGVEIKKDAFMGLIEDKIVSSQSDQLTTVTELLNEMLADDSEILTVIIGQDAEQAVTDNMINWIEEQYPDVEVEVHEGGQPIYQYFFSVE.

The DhaL domain occupies 8-200; the sequence is KLFADMIIQG…LLCVYEGFLK (193 aa).

This is an uncharacterized protein from Staphylococcus aureus (strain MRSA252).